Consider the following 161-residue polypeptide: Non-specific lipid transfer protein GPI-anchored 24 (161 aa).

The signal sequence occupies residues 1–23 (MAQTTTLILLLATLLVAATTVSG). 4 cysteine pairs are disulfide-bonded: cysteine 42–cysteine 79, cysteine 49–cysteine 63, cysteine 64–cysteine 104, and cysteine 77–cysteine 113. N-linked (GlcNAc...) asparagine glycosylation occurs at asparagine 92. The GPI-anchor amidated aspartate moiety is linked to residue aspartate 138. Residues 139–161 (AASKLAGTGLVGIVVITIAAMFY) constitute a propeptide, removed in mature form.

This sequence belongs to the plant LTP family.

It is found in the cell membrane. Functionally, probable lipid transfer protein. This Arabidopsis thaliana (Mouse-ear cress) protein is Non-specific lipid transfer protein GPI-anchored 24.